The following is a 485-amino-acid chain: Glutamate--tRNA ligase (485 aa).

The 'HIGH' region motif lies at 11 to 21 (PSPTGLLHIGN). Residues 255–259 (KLSKR) carry the 'KMSKS' region motif. Lys-258 is an ATP binding site.

The protein belongs to the class-I aminoacyl-tRNA synthetase family. Glutamate--tRNA ligase type 1 subfamily. Monomer.

The protein resides in the cytoplasm. The catalysed reaction is tRNA(Glu) + L-glutamate + ATP = L-glutamyl-tRNA(Glu) + AMP + diphosphate. Functionally, catalyzes the attachment of glutamate to tRNA(Glu) in a two-step reaction: glutamate is first activated by ATP to form Glu-AMP and then transferred to the acceptor end of tRNA(Glu). This Streptococcus mutans serotype c (strain ATCC 700610 / UA159) protein is Glutamate--tRNA ligase.